A 251-amino-acid chain; its full sequence is Probable transcriptional regulatory protein CC_3243 (251 aa).

It belongs to the TACO1 family.

The protein resides in the cytoplasm. The chain is Probable transcriptional regulatory protein CC_3243 from Caulobacter vibrioides (strain ATCC 19089 / CIP 103742 / CB 15) (Caulobacter crescentus).